We begin with the raw amino-acid sequence, 107 residues long: NADH-quinone oxidoreductase subunit K 2 (107 aa).

Transmembrane regions (helical) follow at residues 3 to 23 (LPIY…LWGA), 30 to 50 (VRIL…LITF), and 67 to 87 (ILTL…LAII).

It belongs to the complex I subunit 4L family. NDH-1 is composed of 14 different subunits. Subunits NuoA, H, J, K, L, M, N constitute the membrane sector of the complex.

Its subcellular location is the cell membrane. It catalyses the reaction a quinone + NADH + 5 H(+)(in) = a quinol + NAD(+) + 4 H(+)(out). Functionally, NDH-1 shuttles electrons from NADH, via FMN and iron-sulfur (Fe-S) centers, to quinones in the respiratory chain. The immediate electron acceptor for the enzyme in this species is believed to be a menaquinone. Couples the redox reaction to proton translocation (for every two electrons transferred, four hydrogen ions are translocated across the cytoplasmic membrane), and thus conserves the redox energy in a proton gradient. The protein is NADH-quinone oxidoreductase subunit K 2 of Symbiobacterium thermophilum (strain DSM 24528 / JCM 14929 / IAM 14863 / T).